The following is a 483-amino-acid chain: Macrophage receptor MARCO (483 aa).

Over 1 to 48 the chain is Cytoplasmic; it reads MGNKKALKEEAFLGSAEEGADFDQAMFPVMETFEINDPMPKKRNWGSF. A helical; Signal-anchor for type II membrane protein transmembrane segment spans residues 49–69; the sequence is CTAVMAIHLILLTAGTTLLTL. Topologically, residues 70 to 483 are extracellular; it reads KVLSLQKWIL…HNEDAGVECR (414 aa). Asparagine 85 and asparagine 137 each carry an N-linked (GlcNAc...) asparagine glycan. The interval 146–386 is disordered; that stretch reads RIKGERGSPG…GEKGEKGQSF (241 aa). The region spanning 148 to 383 is the Collagen-like domain; the sequence is KGERGSPGIP…GQKGEKGEKG (236 aa). The span at 153–166 shows a compositional bias: low complexity; it reads SPGIPGLQGPPGIK. The span at 193 to 216 shows a compositional bias: basic and acidic residues; sequence KGSKGDKGLIGPKGEHGTKGDKGD. Positions 273–286 are enriched in low complexity; that stretch reads VPGTPGAAGPSGAK. The segment covering 376–386 has biased composition (basic and acidic residues); sequence KGEKGEKGQSF. The region spanning 389 to 483 is the SRCR domain; it reads VRIVGGTNRG…HNEDAGVECR (95 aa). Intrachain disulfides connect cysteine 412/cysteine 472, cysteine 425/cysteine 482, and cysteine 452/cysteine 462.

Homotrimer; disulfide-linked. Trimers may assemble in larger oligomers thus resulting in the creation of a large surface capable of interacting with very large ligands. N-glycosylated. As to expression, expressed in alveolar macrophages, macrophages of lymph node sinues, and Kupffer cells in liver (at protein level).

The protein localises to the cell membrane. In terms of biological role, pattern recognition receptor (PRR) which binds Gram-positive and Gram-negative bacteria. Also plays a role in binding of unopsonized particles by alveolar macrophages. Binds to the secretoglobin SCGB3A2. In Mesocricetus auratus (Golden hamster), this protein is Macrophage receptor MARCO (MARCO).